The sequence spans 150 residues: D-aminoacyl-tRNA deacylase (150 aa).

Residues 133-134 (GP) carry the Gly-cisPro motif, important for rejection of L-amino acids motif.

The protein belongs to the DTD family. As to quaternary structure, homodimer.

It is found in the cytoplasm. It catalyses the reaction glycyl-tRNA(Ala) + H2O = tRNA(Ala) + glycine + H(+). It carries out the reaction a D-aminoacyl-tRNA + H2O = a tRNA + a D-alpha-amino acid + H(+). Its function is as follows. An aminoacyl-tRNA editing enzyme that deacylates mischarged D-aminoacyl-tRNAs. Also deacylates mischarged glycyl-tRNA(Ala), protecting cells against glycine mischarging by AlaRS. Acts via tRNA-based rather than protein-based catalysis; rejects L-amino acids rather than detecting D-amino acids in the active site. By recycling D-aminoacyl-tRNA to D-amino acids and free tRNA molecules, this enzyme counteracts the toxicity associated with the formation of D-aminoacyl-tRNA entities in vivo and helps enforce protein L-homochirality. The chain is D-aminoacyl-tRNA deacylase from Micrococcus luteus (strain ATCC 4698 / DSM 20030 / JCM 1464 / CCM 169 / CCUG 5858 / IAM 1056 / NBRC 3333 / NCIMB 9278 / NCTC 2665 / VKM Ac-2230) (Micrococcus lysodeikticus).